We begin with the raw amino-acid sequence, 168 residues long: Peptide methionine sulfoxide reductase 2 (168 aa).

The MsrB domain occupies 40–168 (DVKWNDALTP…NSASLNLKKD (129 aa)). Cysteine 79, cysteine 82, cysteine 128, and cysteine 131 together coordinate Zn(2+). Residues cysteine 97 and cysteine 157 are joined by a disulfide bond. The active-site Nucleophile is cysteine 157.

This sequence belongs to the MsrB Met sulfoxide reductase family. It depends on Zn(2+) as a cofactor.

It carries out the reaction L-methionyl-[protein] + [thioredoxin]-disulfide + H2O = L-methionyl-(R)-S-oxide-[protein] + [thioredoxin]-dithiol. In terms of biological role, methionine-R-sulfoxide reductase which catalyzes the reduction of methionine sulfoxide (MetSO) to methionine in proteins. Plays a protective role against oxidative stress by restoring activity to proteins that have been inactivated by methionine oxidation. Protects iron-sulfur clusters from oxidative inactivation along with MXR1. Involved in the regulation of lifespan. In Saccharomyces cerevisiae (strain ATCC 204508 / S288c) (Baker's yeast), this protein is Peptide methionine sulfoxide reductase 2 (MXR2).